We begin with the raw amino-acid sequence, 234 residues long: Phosphoribosylaminoimidazole-succinocarboxamide synthase (234 aa).

This sequence belongs to the SAICAR synthetase family.

The catalysed reaction is 5-amino-1-(5-phospho-D-ribosyl)imidazole-4-carboxylate + L-aspartate + ATP = (2S)-2-[5-amino-1-(5-phospho-beta-D-ribosyl)imidazole-4-carboxamido]succinate + ADP + phosphate + 2 H(+). It participates in purine metabolism; IMP biosynthesis via de novo pathway; 5-amino-1-(5-phospho-D-ribosyl)imidazole-4-carboxamide from 5-amino-1-(5-phospho-D-ribosyl)imidazole-4-carboxylate: step 1/2. The sequence is that of Phosphoribosylaminoimidazole-succinocarboxamide synthase from Exiguobacterium sp. (strain ATCC BAA-1283 / AT1b).